Here is a 173-residue protein sequence, read N- to C-terminus: Phosphopantetheine adenylyltransferase (173 aa).

Serine 9 is a substrate binding site. Residues 9-10 (SF) and histidine 17 each bind ATP. Substrate is bound by residues lysine 41, threonine 73, and arginine 87. Residues 88-90 (GLR), glutamate 98, and 123-129 (YQHLSSS) each bind ATP.

It belongs to the bacterial CoaD family. As to quaternary structure, homohexamer. Requires Mg(2+) as cofactor.

It is found in the cytoplasm. It carries out the reaction (R)-4'-phosphopantetheine + ATP + H(+) = 3'-dephospho-CoA + diphosphate. It functions in the pathway cofactor biosynthesis; coenzyme A biosynthesis; CoA from (R)-pantothenate: step 4/5. Reversibly transfers an adenylyl group from ATP to 4'-phosphopantetheine, yielding dephospho-CoA (dPCoA) and pyrophosphate. The sequence is that of Phosphopantetheine adenylyltransferase from Limosilactobacillus reuteri (strain DSM 20016) (Lactobacillus reuteri).